Reading from the N-terminus, the 561-residue chain is CWF19-like protein mug161 (561 aa).

The tract at residues 286–338 (QQTNKFHKSKSSTALFKSKKDSSSSLNKMHKSESHSALNNLHKSESGTSLNNR) is disordered. S296 bears the Phosphoserine mark. Position 298 is a phosphothreonine (T298). Phosphoserine occurs at positions 317, 319, 331, and 334. Positions 320-337 (HSALNNLHKSESGTSLNN) are enriched in polar residues.

The protein belongs to the CWF19 family.

The protein localises to the nucleus. Functionally, has a role in meiosis. This Schizosaccharomyces pombe (strain 972 / ATCC 24843) (Fission yeast) protein is CWF19-like protein mug161 (mug161).